The following is a 333-amino-acid chain: L-lactate dehydrogenase A chain (333 aa).

NAD(+) is bound by residues 30-58 (GMVG…MEDK) and Arg100. Positions 107, 139, and 170 each coordinate substrate. An NAD(+)-binding site is contributed by Asn139. His194 acts as the Proton acceptor in catalysis. Substrate is bound at residue Thr249.

This sequence belongs to the LDH/MDH superfamily. LDH family. Homotetramer.

It is found in the cytoplasm. The enzyme catalyses (S)-lactate + NAD(+) = pyruvate + NADH + H(+). The protein operates within fermentation; pyruvate fermentation to lactate; (S)-lactate from pyruvate: step 1/1. Interconverts simultaneously and stereospecifically pyruvate and lactate with concomitant interconversion of NADH and NAD(+). This Danio rerio (Zebrafish) protein is L-lactate dehydrogenase A chain (ldha).